The primary structure comprises 300 residues: F-box/LRR-repeat protein 15 (300 aa).

N-acetylmethionine is present on Met1. Residues 19–66 (LLDLPWEDVLLPHVLSRVPLRQLLWLQRVSRAFRALVQLHLARLRRFD) form the F-box domain. The interval 113-269 (NPQLRSVALA…EPSLSRLRKR (157 aa)) is interaction with SMURF1. 5 LRR repeats span residues 141–162 (RLQRLSLAHCDWVDGLALRGLA), 167–188 (ALEELDLTACRQLKDEAIVYLA), 194–215 (GLRNLSLAVNANVGDTAVQELA), 220–241 (ELQHLDLTGCLRVGSDGIRTLA), and 246–267 (ALRSLRVRHCHHVAEPSLSRLR).

It belongs to the FBXL15 family. Part of the SCF (SKP1-CUL1-F-box) E3 ubiquitin-protein ligase complex SCF(FBXL15) composed of CUL1, SKP1, RBX1 and FBXL15.

It is found in the cytoplasm. It functions in the pathway protein modification; protein ubiquitination. Substrate recognition component of a SCF (SKP1-CUL1-F-box protein) E3 ubiquitin-protein ligase complex which mediates the ubiquitination and subsequent proteasomal degradation of SMURF1, thereby acting as a positive regulator of the BMP signaling pathway. Required for dorsal/ventral pattern formation and bone mass maintenance. Also mediates ubiquitination of SMURF2 and WWP2. The polypeptide is F-box/LRR-repeat protein 15 (FBXL15) (Bos taurus (Bovine)).